A 360-amino-acid polypeptide reads, in one-letter code: Mannose-1-phosphate guanylyltransferase catalytic subunit beta (360 aa).

The segment at 2 to 222 is substrate-binding domain; sequence KALILVGGYG…QGFWMDIGQP (221 aa). Asp110 is a GDP-alpha-D-mannose binding site. Asp110 contributes to the Mg(2+) binding site. The active site involves Lys162. Asp218 serves as a coordination point for GDP-alpha-D-mannose. A Mg(2+)-binding site is contributed by Asp218. The segment at 245-360 is hexapeptide repeat domain; that stretch reads CSGPGIVGNV…ESVPEPGIIM (116 aa).

It belongs to the transferase hexapeptide repeat family. In terms of assembly, component of the GMPPA-GMPPB mannose-1-phosphate guanylyltransferase complex composed of 4 GMPPA subunits and 8 GMPPB subunits; the complex is organized into three layers, a central layer made up of 2 GMPPA dimers sandwiched between two layers each made up of 2 GMPPB dimers. GMPPB catalytic activity is reduced when part of the complex and binding of GDP-alpha-D-Mannose by GMPPA induces allosteric feedback inhibition of GMPPB. The cofactor is Mg(2+). In terms of tissue distribution, expressed in the liver (at protein level).

The protein localises to the cytoplasm. It carries out the reaction alpha-D-mannose 1-phosphate + GTP + H(+) = GDP-alpha-D-mannose + diphosphate. The protein operates within nucleotide-sugar biosynthesis; GDP-alpha-D-mannose biosynthesis; GDP-alpha-D-mannose from alpha-D-mannose 1-phosphate (GTP route): step 1/1. With respect to regulation, enzyme activity is reduced by incorporation into the GMPPA-GMPPB mannose-1-phosphate guanylyltransferase complex. Allosterically inhibited, when part of the GMPPA-GMPPB complex, by GDP-alpha-D-mannose binding to GMPPA. Its function is as follows. Catalytic subunit of the GMPPA-GMPPB mannose-1-phosphate guanylyltransferase complex. Catalyzes the formation of GDP-mannose, an essential precursor of glycan moieties of glycoproteins and glycolipids. Can catalyze the reverse reaction in vitro. Together with GMPPA regulates GDP-alpha-D-mannose levels. In Sus scrofa (Pig), this protein is Mannose-1-phosphate guanylyltransferase catalytic subunit beta.